A 177-amino-acid chain; its full sequence is Phycoerythrin beta subunit (177 aa).

Positions 18, 28, 35, and 39 each coordinate (2R,3E)-phycoerythrobilin. 15,16-dihydrobiliverdin is bound by residues Cys50, Asp54, and Cys61. 3 residues coordinate (2R,3E)-phycoerythrobilin: Cys82, Arg84, and Asp85. Arg129 lines the 15,16-dihydrobiliverdin pocket. Asn144 serves as a coordination point for (2R,3E)-phycoerythrobilin. Residues Gln148 and Lys149 each coordinate 15,16-dihydrobiliverdin. (2R,3E)-phycoerythrobilin contacts are provided by Pro154, Gly156, and Cys158.

The protein belongs to the phycobiliprotein family. As to quaternary structure, heterotetramer of 2 different alpha chains and 2 identical beta chains which form 2 alpha-beta heterodimers within the heterotetramer. The two alpha-beta heterodimers are rotated to an open configuration in contrast to the closed configuration found in other cryptophyte species due to the insertion of a single amino acid, 'Asp-65', in a conserved region of the alpha chain. In the open form, the central chromophores are not in physical contact but are separated by a water-filled channel. Contains three phycoerythrobilin chromophores and one 15,16-dihydrobiliverdin chromophore with binding of the phycoerythrobilin chromophores mediated by both the alpha and beta subunits.

The protein localises to the plastid. The protein resides in the chloroplast thylakoid membrane. In terms of biological role, light-harvesting photosynthetic bile pigment-protein from the phycobiliprotein complex. In Hemiselmis andersenii (Cryptophyte alga), this protein is Phycoerythrin beta subunit.